A 1252-amino-acid polypeptide reads, in one-letter code: Protein ITPRID2 (1252 aa).

A disordered region spans residues 28 to 70 (CRSSWQASETEDLSTETTTQDEDEDDEEDLPGTKLPAPAGRGN). A compositionally biased stretch (acidic residues) spans 36-57 (ETEDLSTETTTQDEDEDDEEDL). Phosphothreonine is present on T85. Phosphoserine is present on residues S90, S109, S207, S268, and S328. 3 disordered regions span residues 306-483 (DKTE…HVPA), 552-575 (HVTPTAQDQPYFNESEEESLAPLQ), and 595-636 (FPQC…GELP). Residues 357–372 (TVTEEVSGSSSTVTDS) show a composition bias toward low complexity. Basic and acidic residues-rich tracts occupy residues 395-407 (SREAHSQEKDPLR) and 415-428 (DLGHDGRVSSHCEL). The span at 429-441 (ESSSELKSAQASS) shows a compositional bias: low complexity. Phosphoserine is present on S465. Phosphoserine is present on residues S643, S667, S736, S738, S745, S758, and S766. K807 is covalently cross-linked (Glycyl lysine isopeptide (Lys-Gly) (interchain with G-Cter in SUMO2)). Phosphoserine is present on residues S866 and S898. A coiled-coil region spans residues 955-1031 (QELQVVRRSL…LLGLDEQLRA (77 aa)). Residues S1036, S1051, S1056, S1059, and S1114 each carry the phosphoserine modification. Disordered regions lie at residues 1095–1131 (GESSESVFSQATSESSSVCSSPSHTNRRSRGLPGSKP) and 1147–1180 (ALTPTAPSRTGSVQTPPDLESSEEAGGAEEASPV). Residues 1103 to 1117 (SQATSESSSVCSSPS) are compositionally biased toward low complexity. At T1149 the chain carries Phosphothreonine. Over residues 1151–1161 (TAPSRTGSVQT) the composition is skewed to polar residues. The residue at position 1154 (S1154) is a Phosphoserine. T1161 is subject to Phosphothreonine.

It localises to the cytoplasm. This Mus musculus (Mouse) protein is Protein ITPRID2 (Itprid2).